Here is a 501-residue protein sequence, read N- to C-terminus: Ribose import ATP-binding protein RbsA (501 aa).

2 consecutive ABC transporter domains span residues 5-241 and 252-495; these read LQLK…VGRK and APGD…VGKL. 37–44 lines the ATP pocket; sequence GENGAGKS.

The protein belongs to the ABC transporter superfamily. Ribose importer (TC 3.A.1.2.1) family. The complex is composed of an ATP-binding protein (RbsA), two transmembrane proteins (RbsC) and a solute-binding protein (RbsB).

Its subcellular location is the cell inner membrane. It catalyses the reaction D-ribose(out) + ATP + H2O = D-ribose(in) + ADP + phosphate + H(+). Functionally, part of the ABC transporter complex RbsABC involved in ribose import. Responsible for energy coupling to the transport system. The protein is Ribose import ATP-binding protein RbsA of Escherichia coli (strain K12).